The sequence spans 212 residues: dITP/XTP pyrophosphatase (212 aa).

7 to 12 (SRNKKK) is a substrate binding site. Asp-72 (proton acceptor) is an active-site residue. Position 72 (Asp-72) interacts with Mg(2+). Substrate contacts are provided by residues Ser-73, 163 to 166 (FGYD), Lys-187, and 192 to 193 (HR). Residues 164-194 (GYDPLFEPAEAPGQSSAELTPERKDELSHRG) form a disordered region. Residues 183–192 (TPERKDELSH) show a composition bias toward basic and acidic residues.

Belongs to the HAM1 NTPase family. In terms of assembly, homodimer. The cofactor is Mg(2+).

The enzyme catalyses XTP + H2O = XMP + diphosphate + H(+). The catalysed reaction is dITP + H2O = dIMP + diphosphate + H(+). It catalyses the reaction ITP + H2O = IMP + diphosphate + H(+). Functionally, pyrophosphatase that catalyzes the hydrolysis of nucleoside triphosphates to their monophosphate derivatives, with a high preference for the non-canonical purine nucleotides XTP (xanthosine triphosphate), dITP (deoxyinosine triphosphate) and ITP. Seems to function as a house-cleaning enzyme that removes non-canonical purine nucleotides from the nucleotide pool, thus preventing their incorporation into DNA/RNA and avoiding chromosomal lesions. This is dITP/XTP pyrophosphatase from Corynebacterium urealyticum (strain ATCC 43042 / DSM 7109).